The primary structure comprises 103 residues: Flagellar hook-basal body complex protein FliE (103 aa).

It belongs to the FliE family.

Its subcellular location is the bacterial flagellum basal body. This is Flagellar hook-basal body complex protein FliE from Erwinia tasmaniensis (strain DSM 17950 / CFBP 7177 / CIP 109463 / NCPPB 4357 / Et1/99).